Consider the following 99-residue polypeptide: A-type ATP synthase subunit F (99 aa).

The protein belongs to the V-ATPase F subunit family. Has multiple subunits with at least A(3), B(3), C, D, E, F, H, I and proteolipid K(x).

Its subcellular location is the cell membrane. Functionally, component of the A-type ATP synthase that produces ATP from ADP in the presence of a proton gradient across the membrane. The chain is A-type ATP synthase subunit F from Methanothrix thermoacetophila (strain DSM 6194 / JCM 14653 / NBRC 101360 / PT) (Methanosaeta thermophila).